The sequence spans 267 residues: GTP cyclohydrolase FolE2 (267 aa).

It belongs to the GTP cyclohydrolase IV family.

The catalysed reaction is GTP + H2O = 7,8-dihydroneopterin 3'-triphosphate + formate + H(+). Its pathway is cofactor biosynthesis; 7,8-dihydroneopterin triphosphate biosynthesis; 7,8-dihydroneopterin triphosphate from GTP: step 1/1. Converts GTP to 7,8-dihydroneopterin triphosphate. This is GTP cyclohydrolase FolE2 from Geobacter sp. (strain M21).